Here is a 258-residue protein sequence, read N- to C-terminus: Na(+)-translocating NADH-quinone reductase subunit C (258 aa).

Residues 14–34 (LIVVLAVSLICSVIVAGAVVG) form a helical membrane-spanning segment. FMN phosphoryl serine is present on serine 226.

This sequence belongs to the NqrC family. As to quaternary structure, composed of six subunits; NqrA, NqrB, NqrC, NqrD, NqrE and NqrF. The cofactor is FMN.

It localises to the cell inner membrane. It catalyses the reaction a ubiquinone + n Na(+)(in) + NADH + H(+) = a ubiquinol + n Na(+)(out) + NAD(+). Its function is as follows. NQR complex catalyzes the reduction of ubiquinone-1 to ubiquinol by two successive reactions, coupled with the transport of Na(+) ions from the cytoplasm to the periplasm. NqrA to NqrE are probably involved in the second step, the conversion of ubisemiquinone to ubiquinol. This chain is Na(+)-translocating NADH-quinone reductase subunit C, found in Neisseria meningitidis serogroup A / serotype 4A (strain DSM 15465 / Z2491).